The following is a 417-amino-acid chain: Protein FAM181B (417 aa).

The tract at residues 104 to 147 (CSGLMGTAPPRPASPSAADAPAKRPPGAPTVATPAHCKAAPRRE) is disordered.

This sequence belongs to the FAM181 family.

This Mus musculus (Mouse) protein is Protein FAM181B (Fam181b).